A 150-amino-acid chain; its full sequence is Regulatory protein RecX (150 aa).

This sequence belongs to the RecX family.

It localises to the cytoplasm. Modulates RecA activity. The polypeptide is Regulatory protein RecX (Legionella pneumophila (strain Corby)).